An 829-amino-acid chain; its full sequence is DNA topoisomerase 1 (829 aa).

Residues 1 to 248 are disordered; the sequence is MSEDHVQNDS…AKGNEEGVKK (248 aa). Over residues 22–36 the composition is skewed to basic residues; the sequence is HKHKKDKEHRHKEHK. Composition is skewed to basic and acidic residues over residues 37–58, 68–159, and 193–220; these read KDKD…SEKK, KHRE…EKMK, and KENK…DDKK. Interaction with DNA regions lie at residues 481-482, 544-549, and 641-643; these read KY, RAGNEK, and TAK. One can recognise a Topo IB-type catalytic domain in the interval 488–821; that stretch reads SSRIKGEKDW…SIWQTTTSNF (334 aa). The active-site O-(3'-phospho-DNA)-tyrosine intermediate is the Tyr-779.

This sequence belongs to the type IB topoisomerase family. In terms of assembly, monomer.

Its subcellular location is the nucleus. It carries out the reaction ATP-independent breakage of single-stranded DNA, followed by passage and rejoining.. Its function is as follows. Releases the supercoiling and torsional tension of DNA introduced during the DNA replication and transcription by transiently cleaving and rejoining one strand of the DNA duplex. Introduces a single-strand break via transesterification at a target site in duplex DNA. The scissile phosphodiester is attacked by the catalytic tyrosine of the enzyme, resulting in the formation of a DNA-(3'-phosphotyrosyl)-enzyme intermediate and the expulsion of a 5'-OH DNA strand. TThe free DNA strand then rotates around the intact phosphodiester bond on the opposing strand, thus removing DNA supercoils. Finally, in the religation step, the DNA 5'-OH attacks the covalent intermediate to expel the active-site tyrosine and restore the DNA phosphodiester backbone. May play a role in the circadian transcription of the core circadian clock component BMAL1. The sequence is that of DNA topoisomerase 1 (top1) from Xenopus laevis (African clawed frog).